The following is a 403-amino-acid chain: 4,4'-dithiodibutanoate disulfide reductase (403 aa).

Glutamine 103 is an FMN binding site. The Proton donor role is filled by tyrosine 173. 348 to 349 (AR) provides a ligand contact to FMN.

Belongs to the NADH:flavin oxidoreductase/NADH oxidase family. FMN serves as cofactor.

The enzyme catalyses 2 4-sulfanylbutanoate + NAD(+) = 4,4'-disulfanyldibutanoate + NADH + H(+). Inactivated by cobalt, nickel and zinc ions. Its function is as follows. Involved in the degradation of the organic disulfide 4,4'-dithiodibutyric acid (DTDB). Catalyzes the initial cleavage of DTDB into 2 molecules of 4-mercaptobutyric acid (4MB). Low activities are observed with other disulfide compounds, such as 3,3'-dithiodipropionic acid DTDP, 3,3'-thiodipropionic acid TDP and DTNB. This is 4,4'-dithiodibutanoate disulfide reductase from Rhodococcus erythropolis (Arthrobacter picolinophilus).